A 168-amino-acid polypeptide reads, in one-letter code: Peptide deformylase (168 aa).

2 residues coordinate Fe cation: cysteine 92 and histidine 134. Residue glutamate 135 is part of the active site. Histidine 138 is a binding site for Fe cation.

It belongs to the polypeptide deformylase family. Fe(2+) serves as cofactor.

It catalyses the reaction N-terminal N-formyl-L-methionyl-[peptide] + H2O = N-terminal L-methionyl-[peptide] + formate. Removes the formyl group from the N-terminal Met of newly synthesized proteins. Requires at least a dipeptide for an efficient rate of reaction. N-terminal L-methionine is a prerequisite for activity but the enzyme has broad specificity at other positions. The sequence is that of Peptide deformylase from Teredinibacter turnerae (strain ATCC 39867 / T7901).